The chain runs to 838 residues: uncharacterized protein (838 aa).

This is an uncharacterized protein from Rickettsia conorii (strain ATCC VR-613 / Malish 7).